Consider the following 141-residue polypeptide: MAYLLHAQLFLLTTFILVLNMRLCPVLGHFLGGIEKSSMEEEGASEALNYAVNEYNEKNSDLYLSRVVEVKDVQKQVVAGTKFFFDVILGKTICLKTQGDLTNCPLNEEADQQEHEFCSFVVHDIPWENYIVLLSSSCHSI.

Residues 1 to 27 (MAYLLHAQLFLLTTFILVLNMRLCPVL) form the signal peptide. A Secondary area of contact motif is present at residues 76 to 80 (QVVAG). 2 disulfides stabilise this stretch: Cys94-Cys104 and Cys118-Cys138.

Belongs to the cystatin family. Found in saliva, tears, urine and seminal fluid.

The protein resides in the secreted. This protein strongly inhibits papain and ficin, partially inhibits stem bromelain and bovine cathepsin C, but does not inhibit porcine cathepsin B or clostripain. Papain is inhibited non-competitively. The sequence is that of Cystatin-S (Cst4) from Rattus norvegicus (Rat).